The chain runs to 167 residues: Effector CFEM8 (167 aa).

The first 17 residues, 1–17, serve as a signal peptide directing secretion; it reads MQFSIVVMAALASLASA. The CFEM domain maps to 18–112; it reads QSMDGIPTCA…TPAAAAPYPT (95 aa). Intrachain disulfides connect Cys26-Cys68, Cys30-Cys63, Cys40-Cys47, and Cys49-Cys85. Asp44 is a heme binding site. Residues Asn117 and Asn135 are each glycosylated (N-linked (GlcNAc...) asparagine). Gly143 carries the GPI-anchor amidated glycine lipid modification. Residues 144–167 constitute a propeptide, removed in mature form; sequence SAPQNVAGGLAGIFGLVVAAAFAL.

It belongs to the RBT5 family.

Its subcellular location is the cell membrane. The protein localises to the secreted. It is found in the host nucleus. The protein resides in the host cell membrane. Functionally, appears to function during host infection, and may play a role in suppressing the host immune response. The sequence is that of Effector CFEM8 from Marssonina brunnea f. sp. multigermtubi (strain MB_m1) (Marssonina leaf spot fungus).